The chain runs to 539 residues: 2-isopropylmalate synthase (539 aa).

The Pyruvate carboxyltransferase domain maps to 8–269; sequence VLIFDTTLRD…YFNPFFGRPP (262 aa). Positions 17, 208, 210, and 244 each coordinate Mn(2+). Residues 408–539 are regulatory domain; it reads QLKLVQVSCG…DLAKVEKKGI (132 aa).

Belongs to the alpha-IPM synthase/homocitrate synthase family. LeuA type 1 subfamily. Homodimer. It depends on Mn(2+) as a cofactor.

The protein resides in the cytoplasm. It catalyses the reaction 3-methyl-2-oxobutanoate + acetyl-CoA + H2O = (2S)-2-isopropylmalate + CoA + H(+). Its pathway is amino-acid biosynthesis; L-leucine biosynthesis; L-leucine from 3-methyl-2-oxobutanoate: step 1/4. Its function is as follows. Catalyzes the condensation of the acetyl group of acetyl-CoA with 3-methyl-2-oxobutanoate (2-ketoisovalerate) to form 3-carboxy-3-hydroxy-4-methylpentanoate (2-isopropylmalate). The polypeptide is 2-isopropylmalate synthase (Prochlorococcus marinus (strain NATL2A)).